Consider the following 475-residue polypeptide: Aspartyl/glutamyl-tRNA(Asn/Gln) amidotransferase subunit B (475 aa).

It belongs to the GatB/GatE family. GatB subfamily. Heterotrimer of A, B and C subunits.

It catalyses the reaction L-glutamyl-tRNA(Gln) + L-glutamine + ATP + H2O = L-glutaminyl-tRNA(Gln) + L-glutamate + ADP + phosphate + H(+). The catalysed reaction is L-aspartyl-tRNA(Asn) + L-glutamine + ATP + H2O = L-asparaginyl-tRNA(Asn) + L-glutamate + ADP + phosphate + 2 H(+). In terms of biological role, allows the formation of correctly charged Asn-tRNA(Asn) or Gln-tRNA(Gln) through the transamidation of misacylated Asp-tRNA(Asn) or Glu-tRNA(Gln) in organisms which lack either or both of asparaginyl-tRNA or glutaminyl-tRNA synthetases. The reaction takes place in the presence of glutamine and ATP through an activated phospho-Asp-tRNA(Asn) or phospho-Glu-tRNA(Gln). This chain is Aspartyl/glutamyl-tRNA(Asn/Gln) amidotransferase subunit B, found in Staphylococcus aureus (strain bovine RF122 / ET3-1).